A 325-amino-acid chain; its full sequence is NADH-quinone oxidoreductase subunit H (325 aa).

The next 8 helical transmembrane spans lie at 11–31 (ILIS…CGAF), 81–101 (AIFT…FAIV), 114–134 (IGIL…LFAG), 154–174 (LSYE…VGSF), 186–206 (VWNV…GVAV), 237–257 (FFVG…TLFF), 265–285 (LPPF…FILI), and 304–324 (VCLP…LYNA).

This sequence belongs to the complex I subunit 1 family. NDH-1 is composed of 13 different subunits. Subunits NuoA, H, J, K, L, M, N constitute the membrane sector of the complex.

The protein localises to the cell inner membrane. It catalyses the reaction a quinone + NADH + 5 H(+)(in) = a quinol + NAD(+) + 4 H(+)(out). NDH-1 shuttles electrons from NADH, via FMN and iron-sulfur (Fe-S) centers, to quinones in the respiratory chain. The immediate electron acceptor for the enzyme in this species is believed to be ubiquinone. Couples the redox reaction to proton translocation (for every two electrons transferred, four hydrogen ions are translocated across the cytoplasmic membrane), and thus conserves the redox energy in a proton gradient. This subunit may bind ubiquinone. This chain is NADH-quinone oxidoreductase subunit H, found in Yersinia pseudotuberculosis serotype O:3 (strain YPIII).